The chain runs to 369 residues: Histone deacetylase 8 (369 aa).

A histone deacetylase region spans residues 5–316; it reads LLPVYIHSAE…WTYLTALIVG (312 aa). D93 lines the substrate pocket. H135 functions as the Proton acceptor in the catalytic mechanism. G143 is a binding site for substrate. The a divalent metal cation site is built by D170, H172, and D259. Residue Y298 participates in substrate binding.

It belongs to the histone deacetylase family. HD type 1 subfamily. It depends on a divalent metal cation as a cofactor.

Its subcellular location is the nucleus. It localises to the chromosome. It is found in the cytoplasm. It carries out the reaction N(6)-acetyl-L-lysyl-[histone] + H2O = L-lysyl-[histone] + acetate. The enzyme catalyses N(6)-acetyl-L-lysyl-[protein] + H2O = L-lysyl-[protein] + acetate. The catalysed reaction is N(6)-(2E)-butenoyl-L-lysyl-[protein] + H2O = (2E)-2-butenoate + L-lysyl-[protein]. With respect to regulation, its activity is inhibited by trichostatin A (TSA) and butyrate, 2 well known histone deacetylase inhibitors. Histone deacetylase that catalyzes the deacetylation of lysine residues on the N-terminal part of the core histones (H2A, H2B, H3 and H4). Histone deacetylation gives a tag for epigenetic repression and plays an important role in transcriptional regulation, cell cycle progression and developmental events. Histone deacetylases act via the formation of large multiprotein complexes. Also involved in the deacetylation of non-histone proteins. In addition to protein deacetylase activity, also has protein-lysine deacylase activity: acts as a protein decrotonylase by mediating decrotonylation ((2E)-butenoyl) of histones. The chain is Histone deacetylase 8 (hdac8) from Xenopus tropicalis (Western clawed frog).